Consider the following 440-residue polypeptide: 3-phosphoshikimate 1-carboxyvinyltransferase (440 aa).

3-phosphoshikimate is bound by residues lysine 26, serine 27, and arginine 31. Lysine 26 is a binding site for phosphoenolpyruvate. Phosphoenolpyruvate contacts are provided by glycine 99 and arginine 127. Residues serine 172, glutamine 174, aspartate 320, and lysine 347 each contribute to the 3-phosphoshikimate site. Glutamine 174 contacts phosphoenolpyruvate. Residue aspartate 320 is the Proton acceptor of the active site. Residues arginine 351 and arginine 392 each contribute to the phosphoenolpyruvate site.

Belongs to the EPSP synthase family. Monomer.

It is found in the cytoplasm. The catalysed reaction is 3-phosphoshikimate + phosphoenolpyruvate = 5-O-(1-carboxyvinyl)-3-phosphoshikimate + phosphate. The protein operates within metabolic intermediate biosynthesis; chorismate biosynthesis; chorismate from D-erythrose 4-phosphate and phosphoenolpyruvate: step 6/7. Functionally, catalyzes the transfer of the enolpyruvyl moiety of phosphoenolpyruvate (PEP) to the 5-hydroxyl of shikimate-3-phosphate (S3P) to produce enolpyruvyl shikimate-3-phosphate and inorganic phosphate. This chain is 3-phosphoshikimate 1-carboxyvinyltransferase, found in Xanthomonas axonopodis pv. citri (strain 306).